The sequence spans 206 residues: Large ribosomal subunit protein uL4 (206 aa).

Over residues 66-77 the composition is skewed to basic residues; sequence QKGTGRARHHSA. Positions 66–96 are disordered; the sequence is QKGTGRARHHSARAPQFRGGGQAHGPVVRSH.

The protein belongs to the universal ribosomal protein uL4 family. Part of the 50S ribosomal subunit.

Functionally, one of the primary rRNA binding proteins, this protein initially binds near the 5'-end of the 23S rRNA. It is important during the early stages of 50S assembly. It makes multiple contacts with different domains of the 23S rRNA in the assembled 50S subunit and ribosome. Forms part of the polypeptide exit tunnel. This is Large ribosomal subunit protein uL4 from Brucella anthropi (strain ATCC 49188 / DSM 6882 / CCUG 24695 / JCM 21032 / LMG 3331 / NBRC 15819 / NCTC 12168 / Alc 37) (Ochrobactrum anthropi).